The following is a 229-amino-acid chain: MTTKNKRVLQKCAYREEFKGDMERSTAATSKLPLEVELSRNSKGLIIILSSPSGTGKSSLAKALLKIDNNLRLSISATTRKPRLGEVEGINYYFKTGLEFEELVKQNKFLEYAKIYDNYYGTPKEYVEMLLNQGLDVLFDIDWQGARSIKKNATNVVTIFVLPPNIEVLEQRLRNRATDNEEAIKLRMQLAQNEISHANEYDYVVTNDDFDRTLKKIHAIIVAARDKAF.

In terms of domain architecture, RPE1 insert spans 7–42 (RVLQKCAYREEFKGDMERSTAATSKLPLEVELSRNS). Residues 44–222 (GLIIILSSPS…TLKKIHAIIV (179 aa)) form the Guanylate kinase-like domain. Position 51–58 (51–58 (SPSGTGKS)) interacts with ATP.

This sequence belongs to the guanylate kinase family.

The protein localises to the cytoplasm. The catalysed reaction is GMP + ATP = GDP + ADP. Its function is as follows. Essential for recycling GMP and indirectly, cGMP. The sequence is that of Guanylate kinase (gmk) from Rickettsia conorii (strain ATCC VR-613 / Malish 7).